A 177-amino-acid polypeptide reads, in one-letter code: uncharacterized protein (177 aa).

Belongs to the flavoredoxin family. The cofactor is FMN.

This is an uncharacterized protein from Archaeoglobus fulgidus (strain ATCC 49558 / DSM 4304 / JCM 9628 / NBRC 100126 / VC-16).